The following is a 65-amino-acid chain: Non-structural protein 5a (65 aa).

The protein is Non-structural protein 5a of Avian infectious bronchitis virus (strain Beaudette) (IBV).